A 286-amino-acid chain; its full sequence is UDP-3-O-acyl-N-acetylglucosamine deacetylase (286 aa).

The Zn(2+) site is built by His79, His237, and Asp241. His264 functions as the Proton donor in the catalytic mechanism.

This sequence belongs to the LpxC family. Zn(2+) is required as a cofactor.

The enzyme catalyses a UDP-3-O-[(3R)-3-hydroxyacyl]-N-acetyl-alpha-D-glucosamine + H2O = a UDP-3-O-[(3R)-3-hydroxyacyl]-alpha-D-glucosamine + acetate. The protein operates within glycolipid biosynthesis; lipid IV(A) biosynthesis; lipid IV(A) from (3R)-3-hydroxytetradecanoyl-[acyl-carrier-protein] and UDP-N-acetyl-alpha-D-glucosamine: step 2/6. Its function is as follows. Catalyzes the hydrolysis of UDP-3-O-myristoyl-N-acetylglucosamine to form UDP-3-O-myristoylglucosamine and acetate, the committed step in lipid A biosynthesis. This Brucella melitensis biotype 2 (strain ATCC 23457) protein is UDP-3-O-acyl-N-acetylglucosamine deacetylase.